The chain runs to 547 residues: Myrosinase 2 (547 aa).

The first 28 residues, 1 to 28, serve as a signal peptide directing secretion; sequence MQHNTYIYILTMKLLGFALAILLVVATC. Cystine bridges form between Cys-36–Cys-460, Cys-44–Cys-456, and Cys-236–Cys-244. Residues Gln-69, His-171, and 216–217 each bind a beta-D-glucoside; that span reads NQ. An N-linked (GlcNAc...) asparagine glycan is attached at Asn-340. An a beta-D-glucoside-binding site is contributed by Tyr-359. Asn-384 carries N-linked (GlcNAc...) asparagine glycosylation. A beta-D-glucoside is bound by residues Glu-430, Trp-479, 486 to 487, and Phe-495; that span reads EF. Glu-430 functions as the Nucleophile in the catalytic mechanism. Asn-504 carries N-linked (GlcNAc...) asparagine glycosylation.

Belongs to the glycosyl hydrolase 1 family. As to quaternary structure, interacts with MVP1. Expressed in phloem-associated cells.

It catalyses the reaction a thioglucoside + H2O = a sugar + a thiol.. Functionally, may degrade glucosinolates (glucose residue linked by a thioglucoside bound to an amino acid derivative) to glucose, sulfate and any of the products: thiocyanates, isothiocyanates, nitriles, epithionitriles or oxazolidine-2-thiones. These toxic degradation products can deter insect herbivores. Seems to function in abscisic acid (ABA) and methyl jasmonate (MeJA) signaling in guard cells. Functionally redundant with TGG1. The polypeptide is Myrosinase 2 (Arabidopsis thaliana (Mouse-ear cress)).